A 200-amino-acid chain; its full sequence is 7-methyl-GTP pyrophosphatase (200 aa).

Asp75 serves as the catalytic Proton acceptor.

Belongs to the Maf family. YceF subfamily. The cofactor is a divalent metal cation.

The protein resides in the cytoplasm. It carries out the reaction N(7)-methyl-GTP + H2O = N(7)-methyl-GMP + diphosphate + H(+). Nucleoside triphosphate pyrophosphatase that hydrolyzes 7-methyl-GTP (m(7)GTP). May have a dual role in cell division arrest and in preventing the incorporation of modified nucleotides into cellular nucleic acids. The sequence is that of 7-methyl-GTP pyrophosphatase from Hydrogenovibrio crunogenus (strain DSM 25203 / XCL-2) (Thiomicrospira crunogena).